The following is a 119-amino-acid chain: MKKINKQALIDLVEQKQLKAYVPEFSAGDEVNVAIKLKEKEKVRIQNFTGTVLRRRGKGISETFIVRKTTDGIPIEKNFQIHNPNISIELKRRGKVRRAYISYMRERSGKAAKIKERKQ.

Belongs to the bacterial ribosomal protein bL19 family.

This protein is located at the 30S-50S ribosomal subunit interface and may play a role in the structure and function of the aminoacyl-tRNA binding site. This chain is Large ribosomal subunit protein bL19 (rplS), found in Mycoplasma pneumoniae (strain ATCC 29342 / M129 / Subtype 1) (Mycoplasmoides pneumoniae).